A 63-amino-acid chain; its full sequence is MAEKTVRVQQIGSPIRREASQRETLIGLKLNKLHRIAELPDTPSVRGMIAKVHHLVRVLDGAA.

The protein belongs to the universal ribosomal protein uL30 family. Part of the 50S ribosomal subunit.

The protein is Large ribosomal subunit protein uL30 of Methylobacterium sp. (strain 4-46).